A 33-amino-acid chain; its full sequence is Neurotoxin Nk-3FTx (33 aa).

Cystine bridges form between cysteine 3-cysteine 24 and cysteine 6-cysteine 11.

As to expression, expressed by the venom gland.

Its subcellular location is the secreted. Its function is as follows. Possible voltage-gated potassium channel (Kv) blocker. Decreases amplitude of compound action potential and conduction velocity in toad sciatic nerve. Has only mild anticoagulant activity even at a concentration of 5ug/ml. Shows no cytotoxicity towards human cell lines. The sequence is that of Neurotoxin Nk-3FTx from Naja kaouthia (Monocled cobra).